Consider the following 208-residue polypeptide: Methyl-CpG-binding domain protein 3-like 4 (208 aa).

The protein belongs to the MBD3L family.

The sequence is that of Methyl-CpG-binding domain protein 3-like 4 (MBD3L4) from Homo sapiens (Human).